We begin with the raw amino-acid sequence, 498 residues long: MDFFTEYGEGNRYKIEEVIGKGSYGVVCSALDTHTGEKVAIKKINDIFEHVSDATRILREIKLLRLLRHPDIVEIKHILLPPSRREFKDIYVVFELMESDLHQVIKANDDLTPEHYQFFLYQLLRGLKYIHTANVFHRDLKPKNILANADCKLKICDFGLARVAFSDTPTAIFWTDYVATRWYRAPELCGSFFSKYTPAIDIWSIGCIFAELLTGKPLFPGKNVVHQLDIITDLLGTPSTEAISRIRNEKARRYLSSMRRKKPIPFTQKFPNADPLALRLLERMLSFEPKDRPNAEEALADPYFRNIANVDREPSAQPVTKLEFEFERRRITKEDIRELIYRDILEYHPNMLREYLEGTESAGFMYPSAVDHFKKQFAYLEEHYAKGSTAAPPERQHNSLPRPSVLYSDDRPQNTANIAEDLSKCVLGDNTQKMHQGSASVCANRVPQGGAARPGKVVGSALRYGNCSTSTAEQYEHRRTDRNPALATNTVSPRGSYP.

The region spanning 13-304 is the Protein kinase domain; the sequence is YKIEEVIGKG…AEEALADPYF (292 aa). Residues 19 to 27 and Lys-42 contribute to the ATP site; that span reads IGKGSYGVV. Catalysis depends on Asp-139, which acts as the Proton acceptor. A Phosphothreonine modification is found at Thr-175. The short motif at 175–177 is the TXY element; it reads TDY. Tyr-177 is subject to Phosphotyrosine. Disordered regions lie at residues 388 to 411 and 470 to 498; these read STAA…SDDR and STAE…GSYP. A compositionally biased stretch (polar residues) spans 486–498; sequence LATNTVSPRGSYP.

The protein belongs to the protein kinase superfamily. CMGC Ser/Thr protein kinase family. MAP kinase subfamily. In terms of processing, dually phosphorylated on Thr-175 and Tyr-177, which activates the enzyme.

It carries out the reaction L-seryl-[protein] + ATP = O-phospho-L-seryl-[protein] + ADP + H(+). The enzyme catalyses L-threonyl-[protein] + ATP = O-phospho-L-threonyl-[protein] + ADP + H(+). Its activity is regulated as follows. Activated by threonine and tyrosine phosphorylation. This is Mitogen-activated protein kinase 15 (MPK15) from Oryza sativa subsp. japonica (Rice).